A 323-amino-acid chain; its full sequence is Olfactory receptor 5P58 (323 aa).

Residues 1–28 (MAFLEDGNHTAVTEFILVGLTDDPVLKV) are Extracellular-facing. A glycan (N-linked (GlcNAc...) asparagine) is linked at Asn8. The helical transmembrane segment at 29-49 (ILFTIILCIYLVTVSGNLSTI) threads the bilayer. Residues 50–57 (LLIRVSSQ) are Cytoplasmic-facing. Residues 58–78 (LHHPMYFFLSHLASVDLGYSS) form a helical membrane-spanning segment. At 79 to 102 (SVTPNMLINFLAENNTISYIGCSI) the chain is on the extracellular side. N-linked (GlcNAc...) asparagine glycosylation occurs at Asn92. A disulfide bridge links Cys100 with Cys192. The chain crosses the membrane as a helical span at residues 103 to 123 (QFGSATFFGVLECFLLAVMAY). Topologically, residues 124-136 (DRFVAICNPLLYS) are cytoplasmic. The helical transmembrane segment at 137–157 (IKMSTQVCVKLVVGSYIGSSL) threads the bilayer. The Extracellular segment spans residues 158–199 (NASFVTVSIFNLLFCGPNKINHFFCDFDPLIELSCSDVSVPV). Residues 200-220 (AVTSCSAGLITMITVFVIAVS) traverse the membrane as a helical segment. Topologically, residues 221–240 (YTYILITVLKMRSTEGRHKA) are cytoplasmic. A helical transmembrane segment spans residues 241-261 (FSTCTSHLTAVTLFYGTVTFI). Residues 262–274 (YVMPKSNYSTDQN) are Extracellular-facing. N-linked (GlcNAc...) asparagine glycosylation is present at Asn268. A helical transmembrane segment spans residues 275 to 295 (KVVSVFYMVVIPMLNPLIYSL). At 296–323 (RNNEIKGALKRQLGKKIFSQSNILFCKS) the chain is on the cytoplasmic side.

Belongs to the G-protein coupled receptor 1 family.

Its subcellular location is the cell membrane. Potential odorant receptor. This is Olfactory receptor 5P58 from Mus musculus (Mouse).